Reading from the N-terminus, the 233-residue chain is MAHPGRRGYDNREIVLKYIHYKLSQRGYDWAAGEDRPPVPPAPAPAAAPAAVAAAGASSHHRPEPPGSAAASEVPPAEGLRPAPPGVHLALRQAGDEFSRRYQRDFAQMSGQLHLTPFTAHGRFVAVVEELFRDGVNWGRIVAFFEFGGVMCVESVNREMSPLVDNIATWMTEYLNRHLHNWIQDNGGWDAFVELYGNSMRPLFDFSWISLKTILSLVLVGACITLGAYLGHK.

The BH4 signature appears at 10–30 (DNREIVLKYIHYKLSQRGYDW). Residues 32–86 (AGEDRPPVPPAPAPAAAPAAVAAAGASSHHRPEPPGSAAASEVPPAEGLRPAPPG) form a disordered region. A BH3 motif is present at residues 87-101 (VHLALRQAGDEFSRR). Positions 130-149 (ELFRDGVNWGRIVAFFEFGG) match the BH1 motif. Positions 181 to 196 (NWIQDNGGWDAFVELY) match the BH2 motif. The chain crosses the membrane as a helical span at residues 208–228 (WISLKTILSLVLVGACITLGA).

It belongs to the Bcl-2 family. Forms homodimers, and heterodimers with BAX, BAD, BAK and Bcl-X(L). Heterodimerization with BAX requires intact BH1 and BH2 motifs, and is necessary for anti-apoptotic activity. Also interacts with APAF1 and RAF-1. In adult chicken expressed, in thymus, spleen, kidney, heart, ovary and brain, with the highest levels in the thymus. In the embryo, highly levels expressed in all tissues with high levels in the bursa of Fabricius.

Its subcellular location is the mitochondrion outer membrane. The protein resides in the nucleus membrane. It is found in the endoplasmic reticulum membrane. It localises to the cytoplasm. Suppresses apoptosis in a variety of cell systems including factor-dependent lymphohematopoietic and neural cells. Regulates cell death by controlling the mitochondrial membrane permeability. Appears to function in a feedback loop system with caspases. Inhibits caspase activity either by preventing the release of cytochrome c from the mitochondria and/or by binding to the apoptosis-activating factor (APAF-1). This chain is Apoptosis regulator Bcl-2 (BCL2), found in Gallus gallus (Chicken).